The primary structure comprises 67 residues: UPF0181 protein KPK_1966 (67 aa).

The tract at residues 48–67 (EQIVARFEDEDEDQDEDEDD) is disordered. Over residues 55–67 (EDEDEDQDEDEDD) the composition is skewed to acidic residues.

This sequence belongs to the UPF0181 family.

The polypeptide is UPF0181 protein KPK_1966 (Klebsiella pneumoniae (strain 342)).